Consider the following 114-residue polypeptide: Notch-regulated ankyrin repeat-containing protein (114 aa).

ANK repeat units lie at residues Glu-50 to Leu-79 and Asp-83 to Ser-112.

It belongs to the NRARP family. In terms of assembly, forms a ternary complex with the intracellular domain (ICD) of notch1 and rbpj/suh.

Functionally, promotes loss of intracellular domain (ICD) of Notch1 in embryos. By down-regulating ICD levels, could function as a negative feedback regulator of Notch signaling that attenuates ICD-mediated transcription. Involved in angiogenesis. May be involved in somitogenesis. This is Notch-regulated ankyrin repeat-containing protein (nrarp) from Xenopus laevis (African clawed frog).